The primary structure comprises 559 residues: DNA ligase (559 aa).

Glu248 is a binding site for ATP. Lys250 functions as the N6-AMP-lysine intermediate in the catalytic mechanism. ATP is bound by residues Arg255, Arg270, Glu300, Phe341, Arg417, and Lys423.

Belongs to the ATP-dependent DNA ligase family. Mg(2+) serves as cofactor.

It catalyses the reaction ATP + (deoxyribonucleotide)n-3'-hydroxyl + 5'-phospho-(deoxyribonucleotide)m = (deoxyribonucleotide)n+m + AMP + diphosphate.. Functionally, DNA ligase that seals nicks in double-stranded DNA during DNA replication, DNA recombination and DNA repair. This chain is DNA ligase, found in Methanopyrus kandleri (strain AV19 / DSM 6324 / JCM 9639 / NBRC 100938).